A 339-amino-acid chain; its full sequence is Methylthioribose-1-phosphate isomerase (339 aa).

Substrate contacts are provided by residues 50–52 (RGA), Arg84, and Gln186. Asp227 serves as the catalytic Proton donor. Position 237–238 (237–238 (NK)) interacts with substrate.

This sequence belongs to the eIF-2B alpha/beta/delta subunits family. MtnA subfamily.

The catalysed reaction is 5-(methylsulfanyl)-alpha-D-ribose 1-phosphate = 5-(methylsulfanyl)-D-ribulose 1-phosphate. It functions in the pathway amino-acid biosynthesis; L-methionine biosynthesis via salvage pathway; L-methionine from S-methyl-5-thio-alpha-D-ribose 1-phosphate: step 1/6. Catalyzes the interconversion of methylthioribose-1-phosphate (MTR-1-P) into methylthioribulose-1-phosphate (MTRu-1-P). This Sulfurihydrogenibium sp. (strain YO3AOP1) protein is Methylthioribose-1-phosphate isomerase.